Consider the following 376-residue polypeptide: Lysocardiolipin acyltransferase 1 (376 aa).

Residues 9–29 traverse the membrane as a helical segment; sequence FILFLFAGSFFGSIFMLGPIL. The N-linked (GlcNAc...) asparagine glycan is linked to Asn-35. Residues 48-68 traverse the membrane as a helical segment; the sequence is ATWLTLPVALLETMFGVRVVI. Positions 85–90 match the HXXXXD motif motif; it reads HRTRVD. Lys-183 carries the post-translational modification N6-acetyllysine. A run of 2 helical transmembrane segments spans residues 309–329 and 336–356; these read LLSIVYWALFCSAMCLLIYLY and FIISIVFFVLQERIFGGLEII.

It belongs to the 1-acyl-sn-glycerol-3-phosphate acyltransferase family. As to expression, widely expressed with highest expression in heart, liver and 12.5 dpc aorta-gonad-mesonephros and lower levels in the 16 dpc fetal liver and adult bone marrow. In bone marrow, highest levels are found in B-cells compared with whole bone marrow, T-cells, erythrocytes, and granulocytes.

The protein resides in the endoplasmic reticulum membrane. The catalysed reaction is a 1-acyl-sn-glycero-3-phosphate + an acyl-CoA = a 1,2-diacyl-sn-glycero-3-phosphate + CoA. It catalyses the reaction a 1-acyl-sn-glycero-3-phospho-(1D-myo-inositol) + an acyl-CoA = a 1,2-diacyl-sn-glycero-3-phospho-(1D-myo-inositol) + CoA. It carries out the reaction 1-acyl-sn-glycero-3-phospho-(1'-sn-glycerol) + an acyl-CoA = a 1,2-diacyl-sn-glycero-3-phospho-(1'-sn-glycerol) + CoA. The enzyme catalyses 1-hexadecanoyl-sn-glycero-3-phosphate + (9Z)-octadecenoyl-CoA = 1-hexadecanoyl-2-(9Z-octadecenoyl)-sn-glycero-3-phosphate + CoA. The catalysed reaction is 1-(9Z-octadecenoyl)-sn-glycero-3-phosphate + (9Z)-octadecenoyl-CoA = 1,2-di-(9Z-octadecenoyl)-sn-glycero-3-phosphate + CoA. It catalyses the reaction 1-(9Z,12Z)-octadecadienoyl-sn-glycero-3-phosphate + (9Z)-octadecenoyl-CoA = 1-(9Z,12Z)-octadecadienoyl-2-(9Z)-octadecenoyl-sn-glycero-3-phosphate + CoA. It carries out the reaction 1-(9Z,12Z,15Z)-octadecatrienoyl-sn-glycero-3-phosphate + (9Z)-octadecenoyl-CoA = 1-(9Z,12Z,15Z)-octadecatrienoyl-2-(9Z)-octadecenoyl-sn-glycero-3-phosphate + CoA. The enzyme catalyses 1-(9Z-octadecenoyl)-sn-glycero-3-phosphate + hexadecanoyl-CoA = 1-(9Z)-octadecenoyl-2-hexadecanoyl-sn-glycero-3-phosphate + CoA. The catalysed reaction is 1-(9Z-octadecenoyl)-sn-glycero-3-phosphate + octadecanoyl-CoA = 1-(9Z-octadecenoyl)-2-octadecanoyl-sn-glycero-3-phosphate + CoA. It catalyses the reaction 1-acyl-sn-glycero-3-phospho-(1'-sn-glycerol) + (9Z)-octadecenoyl-CoA = 1-acyl-2-(9Z-octadecenoyl)-sn-glycero-3-phospho-(1'-sn-glycerol) + CoA. It carries out the reaction a 1-acyl-sn-glycero-3-phospho-(1D-myo-inositol) + (9Z)-octadecenoyl-CoA = a 1-acyl-2-(9Z-octadecenoyl)-sn-glycero-3-phospho-(1D-myo-inositol) + CoA. The enzyme catalyses 1-hexadecanoyl-sn-glycero-3-phospho-(1D-myo-inositol) + hexadecanoyl-CoA = 1,2-dihexadecanoyl-sn-glycero-3-phospho-(1D-myo-inositol) + CoA. The catalysed reaction is 1-hexadecanoyl-sn-glycero-3-phospho-(1D-myo-inositol) + octadecanoyl-CoA = 1-hexadecanoyl-2-octadecanoyl-sn-glycero-3-phospho-(1D-myo-inositol) + CoA. It catalyses the reaction 1-hexadecanoyl-sn-glycero-3-phospho-(1D-myo-inositol) + (9Z)-octadecenoyl-CoA = 1-hexadecanoyl-2-(9Z-octadecenoyl)-sn-glycero-3-phospho-(1D-myo-inositol) + CoA. It carries out the reaction 1-hexadecanoyl-sn-glycero-3-phospho-(1D-myo-inositol) + (9Z,12Z)-octadecadienoyl-CoA = 1-hexadecanoyl-2-(9Z,12Z-octadecadienoyl)-sn-glycero-3-phospho-(1D-myo-inositol) + CoA. The enzyme catalyses 1-hexadecanoyl-sn-glycero-3-phospho-(1D-myo-inositol) + (5Z,8Z,11Z,14Z)-eicosatetraenoyl-CoA = 1-hexadecanoyl-2-(5Z,8Z,11Z,14Z-eicosatetraenoyl)-sn-glycero-3-phospho-D-myo-inositol + CoA. The catalysed reaction is 1-hexadecanoyl-sn-glycero-3-phospho-(1'-sn-glycerol) + hexadecanoyl-CoA = 1,2-dihexadecanoyl-sn-glycero-3-phospho-(1'-sn-glycerol) + CoA. It catalyses the reaction 1-hexadecanoyl-sn-glycero-3-phospho-(1'-sn-glycerol) + octadecanoyl-CoA = 1-hexadecanoyl-2-octadecanoyl-sn-glycero-3-phospho-(1'-sn-glycerol) + CoA. It carries out the reaction 1-hexadecanoyl-sn-glycero-3-phospho-(1'-sn-glycerol) + (9Z)-octadecenoyl-CoA = 1-hexadecanoyl-2-(9Z-octadecenoyl)-sn-glycero-3-phospho-(1'-sn-glycerol) + CoA. The enzyme catalyses 1-hexadecanoyl-sn-glycero-3-phospho-(1'-sn-glycerol) + (9Z,12Z)-octadecadienoyl-CoA = 1-hexadecanoyl-2-(9Z,12Z-octadecadienoyl)-sn-glycero-3-phospho-(1'-sn-glycerol) + CoA. The catalysed reaction is 1-tetradecanoyl-sn-glycero-3-phospho-(1'-sn-glycerol) + (9Z)-octadecenoyl-CoA = 1-tetradecanoyl-2-(9Z-octadecenoyl)-sn-glycero-3-phospho-(1'-sn-glycerol) + CoA. It catalyses the reaction 1-octadecanoyl-sn-glycero-3-phospho-(1'-sn-glycerol) + (9Z)-octadecenoyl-CoA = 1-octadecanoyl-2-(9Z-octadecenoyl)-sn-glycero-3-phospho-(1'-sn-glycerol) + CoA. It carries out the reaction 1-(9Z-octadecenoyl)-sn-glycero-3-phospho-(1'-sn-glycerol) + (9Z)-octadecenoyl-CoA = 1,2-di-(9Z-octadecenoyl)-sn-glycero-3-phospho-(1'-sn-glycerol) + CoA. The enzyme catalyses 1-hexadecanoyl-sn-glycero-3-phospho-(1D-myo-inositol) + dodecanoyl-CoA = 1-hexadecanoyl-2-dodecanoyl-sn-glycero-3-phospho-(1D-myo-inositol) + CoA. The catalysed reaction is 1',3'-bis-[1-acyl-sn-glycero-3-phospho]-glycerol + (9Z)-octadecenoyl-CoA = 1'-[1-acyl-2-(9Z)-octadecenoyl-sn-glycero-3-phospho],3'-[1-acyl,2-hydroxy-sn-glycero-3-phospho]-glycerol + CoA. It catalyses the reaction 1'-[1,2-diacyl-sn-glycero-3-phospho],3'-[1-acyl-sn-glycero-3-phospho]-glycerol + (9Z)-octadecenoyl-CoA = 1'-[1,2-diacyl-sn-glycero-3-phospho],3'-[1-acyl,2-(9Z)-octadecenoyl-sn-glycero-3-phospho]-glycerol + CoA. It carries out the reaction 1'-[1,2-diacyl-sn-glycero-3-phospho],3'-[1-acyl-sn-glycero-3-phospho]-glycerol + (9Z,12Z)-octadecadienoyl-CoA = 1'-[1,2-diacyl-sn-glycero-3-phospho],3'-[1-acyl,2-(9Z,12Z)-octadecadienoyl-sn-glycero-3-phospho]-glycerol + CoA. The enzyme catalyses 1'-[1,2-diacyl-sn-glycero-3-phospho],3'-[1-acyl-sn-glycero-3-phospho]-glycerol + dodecanoyl-CoA = 1'-[1,2-diacyl-sn-glycero-3-phospho],3'-[1-acyl,2-dodecanoyl-sn-glycero-3-phospho]-glycerol + CoA. The catalysed reaction is 1',3'-bis-[1-acyl-sn-glycero-3-phospho]-glycerol + dodecanoyl-CoA = 1'-[1-acyl-2-dodecanoyl-sn-glycero-3-phospho],3'-[1-acyl,2-hydroxy-sn-glycero-3-phospho]-glycerol + CoA. It catalyses the reaction a 1-acyl-sn-glycero-3-phosphate + (9Z)-octadecenoyl-CoA = a 1-acyl-2-(9Z-octadecenoyl)-sn-glycero-3-phosphate + CoA. It carries out the reaction 1',3'-bis-[1-acyl-sn-glycero-3-phospho]-glycerol + (9Z,12Z)-octadecadienoyl-CoA = 1'-[1-acyl-2-(9Z,12Z)-octadecadienoyl-sn-glycero-3-phospho],3'-[1-acyl,2-hydroxy-sn-glycero-3-phospho]-glycerol + CoA. The enzyme catalyses 1',3'-bis-[1-acyl-sn-glycero-3-phospho]-glycerol + hexadecanoyl-CoA = 1'-[1-acyl-2-hexadecanoyl-sn-glycero-3-phospho],3'-[1-acyl,2-hydroxy-sn-glycero-3-phospho]-glycerol + CoA. The catalysed reaction is 1',3'-bis-[1-acyl-sn-glycero-3-phospho]-glycerol + octadecanoyl-CoA = 1'-[1-acyl-2-octadecanoyl-sn-glycero-3-phospho],3'-[1-acyl,2-hydroxy-sn-glycero-3-phospho]-glycerol + CoA. It catalyses the reaction 1'-[1,2-diacyl-sn-glycero-3-phospho],3'-[1-acyl-sn-glycero-3-phospho]-glycerol + octanoyl-CoA = 1'-[1,2-diacyl-sn-glycero-3-phospho],3'-[1-acyl,2-octanoyl-sn-glycero-3-phospho]-glycerol + CoA. It carries out the reaction 1',3'-bis-[1-acyl-sn-glycero-3-phospho]-glycerol + octanoyl-CoA = 1'-[1-acyl-2-octanoyl-sn-glycero-3-phospho],3'-[1-acyl,2-hydroxy-sn-glycero-3-phospho]-glycerol + CoA. The enzyme catalyses 1'-[1,2-diacyl-sn-glycero-3-phospho],3'-[1-acyl-sn-glycero-3-phospho]-glycerol + hexadecanoyl-CoA = 1'-[1,2-diacyl-sn-glycero-3-phospho],3'-[1-acyl,2-hexadecanoyl-sn-glycero-3-phospho]-glycerol + CoA. The catalysed reaction is 1'-[1,2-diacyl-sn-glycero-3-phospho],3'-[1-acyl-sn-glycero-3-phospho]-glycerol + (5Z,8Z,11Z,14Z)-eicosatetraenoyl-CoA = 1'-[1,2-diacyl-sn-glycero-3-phospho],3'-[1-acyl,2-(5Z,8Z,11Z,14Z)-eicosatetraenoyl-sn-glycero-3-phospho]-glycerol + CoA. It catalyses the reaction 1',3'-bis-[1-acyl-sn-glycero-3-phospho]-glycerol + (5Z,8Z,11Z,14Z)-eicosatetraenoyl-CoA = 1'-[1-acyl-2-(5Z,8Z,11Z,14Z)-eicosatetraenoyl-sn-glycero-3-phospho],3'-[1-acyl,2-hydroxy-sn-glycero-3-phospho]-glycerol + CoA. It carries out the reaction a 1-acyl-sn-glycero-3-phospho-(1D-myo-inositol) + octadecanoyl-CoA = a 1-acyl-2-octadecanoyl-sn-glycero-3-phospho-(1D-myo-inositol) + CoA. The enzyme catalyses a 2-acyl-sn-glycero-3-phospho-D-myo-inositol + octadecanoyl-CoA = 1-octadecanoyl-2-acyl-sn-glycero-3-phospho-1D-myo-inositol + CoA. It participates in phospholipid metabolism; CDP-diacylglycerol biosynthesis; CDP-diacylglycerol from sn-glycerol 3-phosphate: step 2/3. Exhibits acyl-CoA:lysocardiolipin acyltransferase (ALCAT) activity; catalyzes the reacylation of lyso-cardiolipin to cardiolipin (CL), a key step in CL remodeling. Recognizes both monolysocardiolipin and dilysocardiolipin as substrates with a preference for linoleoyl-CoA and oleoyl-CoA as acyl donors. Also exhibits 1-acyl-sn-glycerol-3-phosphate acyltransferase activity (AGPAT) activity; converts 1-acyl-sn-glycerol-3- phosphate (lysophosphatidic acid or LPA) into 1,2-diacyl-sn-glycerol-3- phosphate (phosphatidic acid or PA) by incorporating an acyl moiety at the sn-2 position of the glycerol backbone. Possesses lysophosphatidylinositol acyltransferase (LPIAT) activity. Possesses lysophosphatidylglycerol acyltransferase (LPGAT) activity. Required for establishment of the hematopoietic and endothelial lineages. In Mus musculus (Mouse), this protein is Lysocardiolipin acyltransferase 1 (Lclat1).